The primary structure comprises 305 residues: UDP-N-acetylenolpyruvoylglucosamine reductase 2 (305 aa).

The region spanning 33 to 197 (VGGKADVFVA…LEARFELEEG (165 aa)) is the FAD-binding PCMH-type domain. R176 is a catalytic residue. The active-site Proton donor is S226. E296 is an active-site residue.

The protein belongs to the MurB family. The cofactor is FAD.

It is found in the cytoplasm. The enzyme catalyses UDP-N-acetyl-alpha-D-muramate + NADP(+) = UDP-N-acetyl-3-O-(1-carboxyvinyl)-alpha-D-glucosamine + NADPH + H(+). Its pathway is cell wall biogenesis; peptidoglycan biosynthesis. Its function is as follows. Cell wall formation. The chain is UDP-N-acetylenolpyruvoylglucosamine reductase 2 from Bacillus cereus (strain ATCC 10987 / NRS 248).